The sequence spans 636 residues: Cysteine-rich receptor-like protein kinase 24 (636 aa).

The N-terminal stretch at 1–20 is a signal peptide; that stretch reads MVKFLVIFWFVVISFSHVSA. 2 consecutive Gnk2-homologous domains span residues 21-124 and 130-235; these read QVCL…NRSF and MEIL…LYPF. Residues 21–254 lie on the Extracellular side of the membrane; that stretch reads QVCLERSGFF…RQKDGKSIST (234 aa). N-linked (GlcNAc...) asparagine glycosylation is found at N33, N50, N98, N101, N121, N137, N145, and N197. A helical membrane pass occupies residues 255–275; that stretch reads GAIVAIIVVPILLLALGVGLW. Residues 276–636 are Cytoplasmic-facing; it reads KRRKAYKTKT…SVSVTCVSPR (361 aa). Positions 312–585 constitute a Protein kinase domain; it reads FHNVNKLGHG…TMSTVFHMLT (274 aa). ATP is bound by residues 318 to 326 and K340; that span reads LGHGGFGEV. D437 (proton acceptor) is an active-site residue.

This sequence belongs to the protein kinase superfamily. Ser/Thr protein kinase family. CRK subfamily.

The protein localises to the membrane. It carries out the reaction L-seryl-[protein] + ATP = O-phospho-L-seryl-[protein] + ADP + H(+). It catalyses the reaction L-threonyl-[protein] + ATP = O-phospho-L-threonyl-[protein] + ADP + H(+). The chain is Cysteine-rich receptor-like protein kinase 24 (CRK24) from Arabidopsis thaliana (Mouse-ear cress).